A 115-amino-acid chain; its full sequence is UPF0295 protein BLi00901/BL05075 (115 aa).

Helical transmembrane passes span 18–38 and 41–61; these read LVFIGFIIMYVGVFFRSSVLL and VFMILGVLSILLSTAVYFWIG.

The protein belongs to the UPF0295 family.

The protein resides in the cell membrane. This Bacillus licheniformis (strain ATCC 14580 / DSM 13 / JCM 2505 / CCUG 7422 / NBRC 12200 / NCIMB 9375 / NCTC 10341 / NRRL NRS-1264 / Gibson 46) protein is UPF0295 protein BLi00901/BL05075.